We begin with the raw amino-acid sequence, 175 residues long: ATP synthase subunit delta (175 aa).

This sequence belongs to the ATPase delta chain family. F-type ATPases have 2 components, F(1) - the catalytic core - and F(0) - the membrane proton channel. F(1) has five subunits: alpha(3), beta(3), gamma(1), delta(1), epsilon(1). F(0) has three main subunits: a(1), b(2) and c(10-14). The alpha and beta chains form an alternating ring which encloses part of the gamma chain. F(1) is attached to F(0) by a central stalk formed by the gamma and epsilon chains, while a peripheral stalk is formed by the delta and b chains.

Its subcellular location is the cell membrane. Functionally, f(1)F(0) ATP synthase produces ATP from ADP in the presence of a proton or sodium gradient. F-type ATPases consist of two structural domains, F(1) containing the extramembraneous catalytic core and F(0) containing the membrane proton channel, linked together by a central stalk and a peripheral stalk. During catalysis, ATP synthesis in the catalytic domain of F(1) is coupled via a rotary mechanism of the central stalk subunits to proton translocation. Its function is as follows. This protein is part of the stalk that links CF(0) to CF(1). It either transmits conformational changes from CF(0) to CF(1) or is implicated in proton conduction. The polypeptide is ATP synthase subunit delta (Lactococcus lactis subsp. cremoris (strain MG1363)).